The sequence spans 353 residues: C-X-C chemokine receptor type 4 (353 aa).

Residues 1–22 are important for chemokine binding and signaling; the sequence is MEELHIYPSDNYTEEDLGSGDY. At 1–39 the chain is on the extracellular side; sequence MEELHIYPSDNYTEEDLGSGDYDSMKEPCFREENAHFNR. Tyr7 carries the post-translational modification Sulfotyrosine. Asn11 carries N-linked (GlcNAc...) asparagine glycosylation. The residue at position 12 (Tyr12) is a Sulfotyrosine. O-linked (Xyl...) (chondroitin sulfate) serine glycosylation is present at Ser19. A Sulfotyrosine modification is found at Tyr22. Intrachain disulfides connect Cys29/Cys275 and Cys110/Cys187. A helical membrane pass occupies residues 40–64; it reads IFLPTVYSIIFLTGIVGNGLVILVM. The Cytoplasmic portion of the chain corresponds to 65-78; the sequence is GYQKKLRSMTDKYR. Residues 79 to 100 form a helical membrane-spanning segment; that stretch reads LHLSVADLLFVLTLPFWAVEAV. Residues 95–98 are chemokine binding; the sequence is WAVE. Over 101–111 the chain is Extracellular; it reads ANWYFGNFLCK. A helical transmembrane segment spans residues 112-131; sequence AVHVIYTVNLYSSVLILAFI. Residues 114–118 are chemokine binding; sequence HVIYT. Topologically, residues 132–155 are cytoplasmic; the sequence is SLDRYLAIVHATNSQRPRKLLAEK. Residues 134–136 carry the Important for signaling motif; the sequence is DRY. The involved in dimerization; when bound to chemokine stretch occupies residues 136-148; it reads YLAIVHATNSQRP. Residues 156–175 form a helical membrane-spanning segment; the sequence is VVYVGVWIPALLLTIPDFIF. Residues 176-196 are Extracellular-facing; the sequence is ANVREADDRYICDRFYPNDSW. Residues 187–191 form a chemokine binding, important for signaling region; it reads CDRFY. The tract at residues 192–211 is involved in dimerization; it reads PNDSWLVVFQFQHIMVGLIL. Residues 197–217 traverse the membrane as a helical segment; sequence LVVFQFQHIMVGLILPGIVIL. Over 218–242 the chain is Cytoplasmic; sequence SCYCIIISKLSHSKGYQKRKALKTT. Residues 243 to 262 traverse the membrane as a helical segment; that stretch reads VILILAFFACWLPYYIGISI. The Extracellular segment spans residues 263 to 283; that stretch reads DSFILLEIIKQGCEFEKTVHK. An involved in dimerization region spans residues 267-269; sequence LLE. A helical membrane pass occupies residues 284-303; the sequence is WISITEALAFFHCCLNPILY. The Cytoplasmic segment spans residues 304-353; that stretch reads AFLGAKFKTSAQHALTSVSRGSSLKILSKGKRGGHSSVSTESESSSFHSS. Phosphoserine is present on residues Ser320 and Ser322. 2 positions are modified to phosphoserine; by PKC and GRK6: Ser325 and Ser326. The tract at residues 330–353 is disordered; the sequence is LSKGKRGGHSSVSTESESSSFHSS. Ser331 bears the Phosphoserine; by GRK6 mark. A Glycyl lysine isopeptide (Lys-Gly) (interchain with G-Cter in ubiquitin) cross-link involves residue Lys332. Residues 338–353 are compositionally biased toward low complexity; it reads HSSVSTESESSSFHSS. Residue Ser340 is modified to Phosphoserine; by GRK6. 2 positions are modified to phosphoserine: Ser349 and Ser352.

This sequence belongs to the G-protein coupled receptor 1 family. As to quaternary structure, monomer. Can form homodimers. Interacts with CD164. Interacts with ARRB2; the interaction is dependent on the C-terminal phosphorylation of CXCR4 and allows activation of MAPK1 and MAPK3. Interacts with ARR3; the interaction is dependent on the C-terminal phosphorylation of CXCR4 and modulates calcium mobilization. Interacts with RNF113A; the interaction, enhanced by CXCL12, promotes CXCR4 ubiquitination and subsequent degradation. Interacts (via the cytoplasmic C-terminal) with ITCH (via the WW domains I and II); the interaction, enhanced by CXCL12, promotes CXCR4 ubiquitination and leads to its degradation. Interacts with extracellular ubiquitin. Interacts with DBN1; this interaction is enhanced by antigenic stimulation. Following LPS binding, may form a complex with GDF5, HSP90AA1 and HSPA8. In terms of processing, phosphorylated on agonist stimulation. Rapidly phosphorylated on serine and threonine residues in the C-terminal. Phosphorylation at Ser-325 and Ser-326 leads to recruitment of ITCH, ubiquitination and protein degradation. Post-translationally, ubiquitinated after ligand binding, leading to its degradation. Ubiquitinated by ITCH at the cell membrane on agonist stimulation. The ubiquitin-dependent mechanism, endosomal sorting complex required for transport (ESCRT), then targets CXCR4 for lysosomal degradation. This process is dependent also on prior Ser-/Thr-phosphorylation in the C-terminal of CXCR4. Also binding of ARRB1 to STAM negatively regulates CXCR4 sorting to lysosomes though modulating ubiquitination of SFR5S. Sulfation is required for efficient binding of CXCL12/SDF-1alpha and promotes its dimerization. In terms of processing, O- and N-glycosylated. N-glycosylation can mask coreceptor function. The O-glycosylation chondroitin sulfate attachment does not affect interaction with CXCL12/SDF-1alpha nor its coreceptor activity.

It is found in the cell membrane. Its subcellular location is the cell junction. The protein localises to the early endosome. It localises to the late endosome. The protein resides in the lysosome. Functionally, receptor for the C-X-C chemokine CXCL12/SDF-1 that transduces a signal by increasing intracellular calcium ion levels and enhancing MAPK1/MAPK3 activation. Involved in the AKT signaling cascade. Plays a role in regulation of cell migration, e.g. during wound healing. Acts as a receptor for extracellular ubiquitin; leading to enhanced intracellular calcium ions and reduced cellular cAMP levels. Binds bacterial lipopolysaccharide (LPS) et mediates LPS-induced inflammatory response, including TNF secretion by monocytes. Involved in hematopoiesis and in cardiac ventricular septum formation. Also plays an essential role in vascularization of the gastrointestinal tract, probably by regulating vascular branching and/or remodeling processes in endothelial cells. Involved in cerebellar development. In the CNS, could mediate hippocampal-neuron survival. In Canis lupus familiaris (Dog), this protein is C-X-C chemokine receptor type 4 (CXCR4).